Here is a 185-residue protein sequence, read N- to C-terminus: Ribosome-recycling factor (185 aa).

The interval 138 to 159 (KVKKLEKDKEISEDESKKAQEQ) is disordered.

Belongs to the RRF family.

The protein resides in the cytoplasm. Functionally, responsible for the release of ribosomes from messenger RNA at the termination of protein biosynthesis. May increase the efficiency of translation by recycling ribosomes from one round of translation to another. This Helicobacter acinonychis (strain Sheeba) protein is Ribosome-recycling factor.